Here is a 407-residue protein sequence, read N- to C-terminus: Na(+)-translocating NADH-quinone reductase subunit F (407 aa).

The helical transmembrane segment at 4 to 24 (IILGVFFFTAIVVALVFVILG) threads the bilayer. The 93-residue stretch at 33–125 (GNVEVLINGE…NMKIHVHEEV (93 aa)) folds into the 2Fe-2S ferredoxin-type domain. [2Fe-2S] cluster is bound by residues C68, C74, C77, and C109. Residues 128–269 (VKKWECTVRS…SGPFGEFFAR (142 aa)) form the FAD-binding FR-type domain.

The protein belongs to the NqrF family. In terms of assembly, composed of six subunits; NqrA, NqrB, NqrC, NqrD, NqrE and NqrF. [2Fe-2S] cluster is required as a cofactor. The cofactor is FAD.

It localises to the cell inner membrane. It catalyses the reaction a ubiquinone + n Na(+)(in) + NADH + H(+) = a ubiquinol + n Na(+)(out) + NAD(+). Functionally, NQR complex catalyzes the reduction of ubiquinone-1 to ubiquinol by two successive reactions, coupled with the transport of Na(+) ions from the cytoplasm to the periplasm. The first step is catalyzed by NqrF, which accepts electrons from NADH and reduces ubiquinone-1 to ubisemiquinone by a one-electron transfer pathway. This chain is Na(+)-translocating NADH-quinone reductase subunit F, found in Methylococcus capsulatus (strain ATCC 33009 / NCIMB 11132 / Bath).